We begin with the raw amino-acid sequence, 621 residues long: Chaperone protein HscA homolog (621 aa).

Belongs to the heat shock protein 70 family.

In terms of biological role, chaperone involved in the maturation of iron-sulfur cluster-containing proteins. Has a low intrinsic ATPase activity which is markedly stimulated by HscB. This is Chaperone protein HscA homolog from Cupriavidus necator (strain ATCC 17699 / DSM 428 / KCTC 22496 / NCIMB 10442 / H16 / Stanier 337) (Ralstonia eutropha).